We begin with the raw amino-acid sequence, 959 residues long: DNA-directed RNA polymerase subunit beta'' (959 aa).

Positions 211, 288, 295, and 298 each coordinate Zn(2+).

This sequence belongs to the RNA polymerase beta' chain family. RpoC2 subfamily. In plastids the minimal PEP RNA polymerase catalytic core is composed of four subunits: alpha, beta, beta', and beta''. When a (nuclear-encoded) sigma factor is associated with the core the holoenzyme is formed, which can initiate transcription. Requires Zn(2+) as cofactor.

Its subcellular location is the plastid. It localises to the apicoplast. It catalyses the reaction RNA(n) + a ribonucleoside 5'-triphosphate = RNA(n+1) + diphosphate. Its function is as follows. DNA-dependent RNA polymerase catalyzes the transcription of DNA into RNA using the four ribonucleoside triphosphates as substrates. This chain is DNA-directed RNA polymerase subunit beta'', found in Plasmodium falciparum (isolate 3D7).